The primary structure comprises 101 residues: Small ribosomal subunit protein uS14A (101 aa).

A disordered region spans residues 35–56 (TSSYEQRLDAQRALSRQPRDAS).

Belongs to the universal ribosomal protein uS14 family. In terms of assembly, part of the 30S ribosomal subunit. Contacts proteins S3 and S10.

Its function is as follows. Binds 16S rRNA, required for the assembly of 30S particles and may also be responsible for determining the conformation of the 16S rRNA at the A site. This is Small ribosomal subunit protein uS14A from Mycobacterium marinum (strain ATCC BAA-535 / M).